The sequence spans 56 residues: Serine protease inhibitor Kazal-type 1 (56 aa).

The region spanning 3–56 is the Kazal-like domain; it reads PQREATCTSEVSGCPKIYNPVCGTDGITYSNECVLCSENKKRQTPVLIQKSGPC. Disulfide bonds link Cys9-Cys38, Cys16-Cys35, and Cys24-Cys56.

The protein localises to the secreted. Functionally, serine protease inhibitor which exhibits anti-trypsin activity. In the pancreas, protects against trypsin-catalyzed premature activation of zymogens. Its function is as follows. In the male reproductive tract, binds to sperm heads where it modulates sperm capacitance by inhibiting calcium uptake and nitrogen oxide (NO) production. This is Serine protease inhibitor Kazal-type 1 (SPINK1) from Sus scrofa (Pig).